Here is a 416-residue protein sequence, read N- to C-terminus: Multifunctional CCA protein (416 aa).

Glycine 8 and arginine 11 together coordinate ATP. Positions 8 and 11 each coordinate CTP. Aspartate 21 and aspartate 23 together coordinate Mg(2+). The ATP site is built by arginine 91, arginine 137, and arginine 140. Residues arginine 91, arginine 137, and arginine 140 each contribute to the CTP site. Positions 228–329 (TGLHTMMVLA…IKLFDKADFW (102 aa)) constitute an HD domain.

It belongs to the tRNA nucleotidyltransferase/poly(A) polymerase family. Bacterial CCA-adding enzyme type 1 subfamily. Monomer. Can also form homodimers and oligomers. Mg(2+) serves as cofactor. Requires Ni(2+) as cofactor.

The catalysed reaction is a tRNA precursor + 2 CTP + ATP = a tRNA with a 3' CCA end + 3 diphosphate. The enzyme catalyses a tRNA with a 3' CCA end + 2 CTP + ATP = a tRNA with a 3' CCACCA end + 3 diphosphate. In terms of biological role, catalyzes the addition and repair of the essential 3'-terminal CCA sequence in tRNAs without using a nucleic acid template. Adds these three nucleotides in the order of C, C, and A to the tRNA nucleotide-73, using CTP and ATP as substrates and producing inorganic pyrophosphate. tRNA 3'-terminal CCA addition is required both for tRNA processing and repair. Also involved in tRNA surveillance by mediating tandem CCA addition to generate a CCACCA at the 3' terminus of unstable tRNAs. While stable tRNAs receive only 3'-terminal CCA, unstable tRNAs are marked with CCACCA and rapidly degraded. This chain is Multifunctional CCA protein, found in Shewanella sp. (strain MR-4).